We begin with the raw amino-acid sequence, 318 residues long: Bis(5'-nucleosyl)-tetraphosphatase, symmetrical (318 aa).

Residues 269 to 318 (PGREVTGPAPVARAPRRPRERLGRQRSRGNRGNAGNTAVPAKPQVDTPQD) are disordered. Over residues 282–297 (APRRPRERLGRQRSRG) the composition is skewed to basic residues.

This sequence belongs to the Ap4A hydrolase family.

It carries out the reaction P(1),P(4)-bis(5'-adenosyl) tetraphosphate + H2O = 2 ADP + 2 H(+). In terms of biological role, hydrolyzes diadenosine 5',5'''-P1,P4-tetraphosphate to yield ADP. In Xanthomonas oryzae pv. oryzae (strain KACC10331 / KXO85), this protein is Bis(5'-nucleosyl)-tetraphosphatase, symmetrical.